The primary structure comprises 208 residues: Small ribosomal subunit protein uS5 (208 aa).

Positions 1–21 (MSDREQRDGGRSAENNNDRKG) are enriched in basic and acidic residues. The segment at 1–38 (MSDREQRDGGRSAENNNDRKGRNNGRRNDRRNHQDNER) is disordered. Positions 41–104 (YIERVVTINR…EEARKNFFRV (64 aa)) constitute an S5 DRBM domain.

Belongs to the universal ribosomal protein uS5 family. In terms of assembly, part of the 30S ribosomal subunit. Contacts proteins S4 and S8.

With S4 and S12 plays an important role in translational accuracy. Functionally, located at the back of the 30S subunit body where it stabilizes the conformation of the head with respect to the body. This is Small ribosomal subunit protein uS5 from Corynebacterium aurimucosum (strain ATCC 700975 / DSM 44827 / CIP 107346 / CN-1) (Corynebacterium nigricans).